Consider the following 327-residue polypeptide: Aspartate--ammonia ligase (327 aa).

This sequence belongs to the class-II aminoacyl-tRNA synthetase family. AsnA subfamily.

The protein localises to the cytoplasm. The enzyme catalyses L-aspartate + NH4(+) + ATP = L-asparagine + AMP + diphosphate + H(+). The protein operates within amino-acid biosynthesis; L-asparagine biosynthesis; L-asparagine from L-aspartate (ammonia route): step 1/1. The chain is Aspartate--ammonia ligase from Bacillus cytotoxicus (strain DSM 22905 / CIP 110041 / 391-98 / NVH 391-98).